We begin with the raw amino-acid sequence, 83 residues long: Short neurotoxin 3FTx-Oxy3 (83 aa).

The signal sequence occupies residues 1–21 (MKTLLLTLVVVTIVCLDLGYT). 4 cysteine pairs are disulfide-bonded: cysteine 24–cysteine 45, cysteine 38–cysteine 62, cysteine 64–cysteine 75, and cysteine 76–cysteine 81.

Belongs to the three-finger toxin family. Short-chain subfamily. Type I alpha-neurotoxin sub-subfamily. In terms of tissue distribution, expressed by the venom gland.

It is found in the secreted. Its function is as follows. Binds to muscle nicotinic acetylcholine receptor (nAChR) and inhibit acetylcholine from binding to the receptor, thereby impairing neuromuscular transmission. The sequence is that of Short neurotoxin 3FTx-Oxy3 from Oxyuranus microlepidotus (Inland taipan).